The primary structure comprises 119 residues: Large ribosomal subunit protein uL22 (119 aa).

It belongs to the universal ribosomal protein uL22 family. As to quaternary structure, part of the 50S ribosomal subunit.

Its function is as follows. This protein binds specifically to 23S rRNA; its binding is stimulated by other ribosomal proteins, e.g. L4, L17, and L20. It is important during the early stages of 50S assembly. It makes multiple contacts with different domains of the 23S rRNA in the assembled 50S subunit and ribosome. In terms of biological role, the globular domain of the protein is located near the polypeptide exit tunnel on the outside of the subunit, while an extended beta-hairpin is found that lines the wall of the exit tunnel in the center of the 70S ribosome. The chain is Large ribosomal subunit protein uL22 from Chlorobaculum tepidum (strain ATCC 49652 / DSM 12025 / NBRC 103806 / TLS) (Chlorobium tepidum).